A 141-amino-acid chain; its full sequence is Putative antiporter subunit mnhB2 (141 aa).

A run of 4 helical transmembrane segments spans residues 10–30 (TVTKIVVFILLTFGFYLFLAG), 35–55 (GGGFIGGLVFSSAFLLMFLAF), 70–90 (ILMICGSLLSFLTAVVPMFFG), and 116–136 (VFEAGIVLAVVGVVVTVMLSI).

This sequence belongs to the CPA3 antiporters (TC 2.A.63) subunit B family. May form a heterooligomeric complex that consists of seven subunits: mnhA2, mnhB2, mnhC2, mnhD2, mnhE2, mnhF2 and mnhG2.

It localises to the cell membrane. The sequence is that of Putative antiporter subunit mnhB2 (mnhB2) from Staphylococcus saprophyticus subsp. saprophyticus (strain ATCC 15305 / DSM 20229 / NCIMB 8711 / NCTC 7292 / S-41).